An 89-amino-acid chain; its full sequence is MAISQQRKDELIKEYRVHETDTGSPEVQIAVLTAEITALNEHLREHKKDHHSRRGLLKMVGRRRHLLNYLRSKDIQRYRELIKSLGIRR.

Belongs to the universal ribosomal protein uS15 family. Part of the 30S ribosomal subunit. Forms a bridge to the 50S subunit in the 70S ribosome, contacting the 23S rRNA.

Functionally, one of the primary rRNA binding proteins, it binds directly to 16S rRNA where it helps nucleate assembly of the platform of the 30S subunit by binding and bridging several RNA helices of the 16S rRNA. Its function is as follows. Forms an intersubunit bridge (bridge B4) with the 23S rRNA of the 50S subunit in the ribosome. The protein is Small ribosomal subunit protein uS15 of Staphylococcus epidermidis (strain ATCC 12228 / FDA PCI 1200).